The sequence spans 35 residues: Potassium channel toxin alpha-KTx 6.12 (35 aa).

Pyrrolidone carboxylic acid is present on Gln-1. 4 disulfides stabilise this stretch: Cys-4-Cys-24, Cys-10-Cys-29, Cys-14-Cys-31, and Cys-19-Cys-34. At Lys-35 the chain carries Lysine amide.

This sequence belongs to the short scorpion toxin superfamily. Potassium channel inhibitor family. Alpha-KTx 06 subfamily. Monomer. As to expression, expressed by the venom gland.

The protein localises to the secreted. Its function is as follows. High affinity blocker of Kv1.3/KCNA3 channels of human T cells. Blocks Kv1.2/KCNA2 with an order of magnitude smaller than for Kv1.3/KCNA3. This chain is Potassium channel toxin alpha-KTx 6.12, found in Anuroctonus phaiodactylus (Mafia scorpion).